The following is a 577-amino-acid chain: Proline--tRNA ligase (577 aa).

Belongs to the class-II aminoacyl-tRNA synthetase family. ProS type 1 subfamily. As to quaternary structure, homodimer.

It localises to the cytoplasm. It carries out the reaction tRNA(Pro) + L-proline + ATP = L-prolyl-tRNA(Pro) + AMP + diphosphate. In terms of biological role, catalyzes the attachment of proline to tRNA(Pro) in a two-step reaction: proline is first activated by ATP to form Pro-AMP and then transferred to the acceptor end of tRNA(Pro). As ProRS can inadvertently accommodate and process non-cognate amino acids such as alanine and cysteine, to avoid such errors it has two additional distinct editing activities against alanine. One activity is designated as 'pretransfer' editing and involves the tRNA(Pro)-independent hydrolysis of activated Ala-AMP. The other activity is designated 'posttransfer' editing and involves deacylation of mischarged Ala-tRNA(Pro). The misacylated Cys-tRNA(Pro) is not edited by ProRS. The sequence is that of Proline--tRNA ligase from Thermotoga maritima (strain ATCC 43589 / DSM 3109 / JCM 10099 / NBRC 100826 / MSB8).